The sequence spans 66 residues: Disintegrin EO5B (66 aa).

A Disintegrin domain is found at 1–65; the sequence is NSAHPCCDPV…DCPRNPYKGK (65 aa). Disulfide bonds link C6–C29, C20–C26, C25–C50, and C38–C57. Residues 42–44 carry the Cell attachment site; atypical (VGD) motif; the sequence is VGD.

It belongs to the disintegrin family. Dimeric disintegrin subfamily. Heterodimer with EO4A or EO5A; disulfide-linked. In terms of tissue distribution, expressed by the venom gland.

It localises to the secreted. In terms of biological role, poor inhibitor of platelet aggregation. When it dimerizes with EO4A, it inhibits the adhesion of cells expressing the RGD-dependent integrin alpha-5/beta-1 (ITGA5/ITGB1) to immobilized fibronectin. When it dimerizes with EO5A, it inhibits the adhesion of the alpha-4/beta-1 (ITGA4/ITGB1) integrin to VCAM-1. When it dimerizes either with EO4A or EO5A, the inhibition on alpha-IIb/beta-3 (ITGA2B/ITGB3) is low. The sequence is that of Disintegrin EO5B from Echis ocellatus (Ocellated saw-scaled viper).